A 118-amino-acid chain; its full sequence is Small ribosomal subunit protein uS13 (118 aa).

A disordered region spans residues 92-118 (RRGLPVRGQRTKTNARTRKGPRKPIKK).

Belongs to the universal ribosomal protein uS13 family. As to quaternary structure, part of the 30S ribosomal subunit. Forms a loose heterodimer with protein S19. Forms two bridges to the 50S subunit in the 70S ribosome.

Its function is as follows. Located at the top of the head of the 30S subunit, it contacts several helices of the 16S rRNA. In the 70S ribosome it contacts the 23S rRNA (bridge B1a) and protein L5 of the 50S subunit (bridge B1b), connecting the 2 subunits; these bridges are implicated in subunit movement. Contacts the tRNAs in the A and P-sites. The polypeptide is Small ribosomal subunit protein uS13 (Pectobacterium carotovorum subsp. carotovorum (strain PC1)).